We begin with the raw amino-acid sequence, 296 residues long: MPHTLLILNGKEAGNQDVRNAVKNLRDEGVTLHVRVTWEQGDAKRYVNEAAALAVETIIAGGGDGTINEVASALIALPESNRPSLGILPLGTANDFATSCSIPLQIDHALQLAVKGRAVAIDLAQVNDKHYFINMATGGFGTRITTETPEKLKAVLGGASYFIHGLMRMDTIKADSCEIRGPGFEWSGDALVIGIGNGRQAGGGQPLCPDALINDGLLQLRLLIAEELLPALLTSVFSGEKNKNVIETTLPWLEITAPHDITFNLDGEPLSGKNFRIEVIPNAIQCRLPPNCELLG.

A DAGKc domain is found at 1–130 (MPHTLLILNG…IDLAQVNDKH (130 aa)). Residues Thr37, 63–69 (GDGTINE), and Thr92 each bind ATP. Leu212, Asp215, and Leu217 together coordinate Mg(2+). Glu268 functions as the Proton acceptor in the catalytic mechanism.

Belongs to the diacylglycerol/lipid kinase family. YegS lipid kinase subfamily. Mg(2+) serves as cofactor. Requires Ca(2+) as cofactor.

The protein localises to the cytoplasm. Probably phosphorylates lipids; the in vivo substrate is unknown. The protein is Probable lipid kinase YegS-like of Yersinia enterocolitica serotype O:8 / biotype 1B (strain NCTC 13174 / 8081).